Here is a 255-residue protein sequence, read N- to C-terminus: tRNA (guanine-N(7)-)-methyltransferase (255 aa).

S-adenosyl-L-methionine is bound by residues E64, E89, D116, and D138. Residue D138 is part of the active site. Residues K142, D174, and 212-215 (TRYE) contribute to the substrate site.

It belongs to the class I-like SAM-binding methyltransferase superfamily. TrmB family.

It catalyses the reaction guanosine(46) in tRNA + S-adenosyl-L-methionine = N(7)-methylguanosine(46) in tRNA + S-adenosyl-L-homocysteine. The protein operates within tRNA modification; N(7)-methylguanine-tRNA biosynthesis. In terms of biological role, catalyzes the formation of N(7)-methylguanine at position 46 (m7G46) in tRNA. The chain is tRNA (guanine-N(7)-)-methyltransferase from Rhodospirillum rubrum (strain ATCC 11170 / ATH 1.1.1 / DSM 467 / LMG 4362 / NCIMB 8255 / S1).